Reading from the N-terminus, the 218-residue chain is MAQDCITIKGTRGGLLILLDASRDFNEIKANLAAKFAAARGFFRGAAFALVPTSPLNSQETAELEAICREHGLVPGNNITLPSRRRPGGNQAAHPDPVALTSTGLPTLLDEGNLRNGQEINYPGHVMWLGDVHQGATIRAGGNILIMGTLKGNAHAGSQGDRSAAIVAYRMEPEQLGIAGIIARSPEQKTRHPYPEIARLVGTRIVIDPYLSPKSSRN.

This sequence belongs to the MinC family. As to quaternary structure, interacts with MinD and FtsZ.

Functionally, cell division inhibitor that blocks the formation of polar Z ring septums. Rapidly oscillates between the poles of the cell to destabilize FtsZ filaments that have formed before they mature into polar Z rings. Prevents FtsZ polymerization. The sequence is that of Probable septum site-determining protein MinC from Moorella thermoacetica (strain ATCC 39073 / JCM 9320).